The primary structure comprises 274 residues: Diaminopimelate epimerase (274 aa).

Substrate is bound by residues Asn-11, Gln-44, and Asn-64. Residue Cys-73 is the Proton donor of the active site. Residues 74–75 (GN), Asn-157, Asn-190, and 208–209 (ER) contribute to the substrate site. The active-site Proton acceptor is the Cys-217. A substrate-binding site is contributed by 218 to 219 (GS).

It belongs to the diaminopimelate epimerase family. In terms of assembly, homodimer.

The protein resides in the cytoplasm. It carries out the reaction (2S,6S)-2,6-diaminopimelate = meso-2,6-diaminopimelate. It functions in the pathway amino-acid biosynthesis; L-lysine biosynthesis via DAP pathway; DL-2,6-diaminopimelate from LL-2,6-diaminopimelate: step 1/1. Its function is as follows. Catalyzes the stereoinversion of LL-2,6-diaminopimelate (L,L-DAP) to meso-diaminopimelate (meso-DAP), a precursor of L-lysine and an essential component of the bacterial peptidoglycan. This Escherichia fergusonii (strain ATCC 35469 / DSM 13698 / CCUG 18766 / IAM 14443 / JCM 21226 / LMG 7866 / NBRC 102419 / NCTC 12128 / CDC 0568-73) protein is Diaminopimelate epimerase.